Here is a 187-residue protein sequence, read N- to C-terminus: UPF0301 protein VV2869 (187 aa).

Belongs to the UPF0301 (AlgH) family.

The sequence is that of UPF0301 protein VV2869 from Vibrio vulnificus (strain YJ016).